A 386-amino-acid chain; its full sequence is Myosin light chain kinase family member 4 (386 aa).

The residue at position 100 (S100) is a Phosphoserine. Residues 107–361 (VSKSEILGGG…ASEALKHPWL (255 aa)) enclose the Protein kinase domain. ATP is bound by residues 113-121 (LGGGRFGQV) and K136. D227 functions as the Proton acceptor in the catalytic mechanism.

The protein belongs to the protein kinase superfamily. CAMK Ser/Thr protein kinase family.

The enzyme catalyses L-seryl-[protein] + ATP = O-phospho-L-seryl-[protein] + ADP + H(+). It catalyses the reaction L-threonyl-[protein] + ATP = O-phospho-L-threonyl-[protein] + ADP + H(+). This is Myosin light chain kinase family member 4 (Mylk4) from Mus musculus (Mouse).